A 414-amino-acid polypeptide reads, in one-letter code: Serine hydroxymethyltransferase (414 aa).

(6S)-5,6,7,8-tetrahydrofolate contacts are provided by residues leucine 116 and 120-122; that span reads GHL. Lysine 225 is subject to N6-(pyridoxal phosphate)lysine. Position 349–351 (349–351) interacts with (6S)-5,6,7,8-tetrahydrofolate; it reads SPF.

It belongs to the SHMT family. As to quaternary structure, homodimer. It depends on pyridoxal 5'-phosphate as a cofactor.

The protein resides in the cytoplasm. It catalyses the reaction (6R)-5,10-methylene-5,6,7,8-tetrahydrofolate + glycine + H2O = (6S)-5,6,7,8-tetrahydrofolate + L-serine. Its pathway is one-carbon metabolism; tetrahydrofolate interconversion. It participates in amino-acid biosynthesis; glycine biosynthesis; glycine from L-serine: step 1/1. Its function is as follows. Catalyzes the reversible interconversion of serine and glycine with tetrahydrofolate (THF) serving as the one-carbon carrier. This reaction serves as the major source of one-carbon groups required for the biosynthesis of purines, thymidylate, methionine, and other important biomolecules. Also exhibits THF-independent aldolase activity toward beta-hydroxyamino acids, producing glycine and aldehydes, via a retro-aldol mechanism. The protein is Serine hydroxymethyltransferase of Oenococcus oeni (strain ATCC BAA-331 / PSU-1).